The following is a 71-amino-acid chain: NAD(P)H-quinone oxidoreductase subunit O (71 aa).

It belongs to the complex I NdhO subunit family. NDH-1 can be composed of about 15 different subunits; different subcomplexes with different compositions have been identified which probably have different functions.

It is found in the cellular thylakoid membrane. It catalyses the reaction a plastoquinone + NADH + (n+1) H(+)(in) = a plastoquinol + NAD(+) + n H(+)(out). The catalysed reaction is a plastoquinone + NADPH + (n+1) H(+)(in) = a plastoquinol + NADP(+) + n H(+)(out). Functionally, NDH-1 shuttles electrons from an unknown electron donor, via FMN and iron-sulfur (Fe-S) centers, to quinones in the respiratory and/or the photosynthetic chain. The immediate electron acceptor for the enzyme in this species is believed to be plastoquinone. Couples the redox reaction to proton translocation, and thus conserves the redox energy in a proton gradient. Cyanobacterial NDH-1 also plays a role in inorganic carbon-concentration. The protein is NAD(P)H-quinone oxidoreductase subunit O of Microcystis aeruginosa (strain NIES-843 / IAM M-2473).